The primary structure comprises 350 residues: Calcium uniporter protein, mitochondrial (350 aa).

The N-terminal 49 residues, M1–T49, are a transit peptide targeting the mitochondrion. Topologically, residues A50–T232 are mitochondrial matrix. 2 positions are modified to phosphoserine; by CaMK2: S56 and S91. Residues V74–R164 form an N-terminal MCU domain region. C96 carries the S-glutathionyl cysteine modification. A coiled-coil region spans residues I191 to R220. Residues L233–E256 traverse the membrane as a helical segment. The Mitochondrial intermembrane segment spans residues Y257–P264. The short motif at W259 to Y267 is the Selectivity filter element. E263 is a binding site for Ca(2+). A helical membrane pass occupies residues V265–V282. The Mitochondrial matrix portion of the chain corresponds to M283–E350. The interval T284–V289 is juxtamembrane helix. The stretch at R310–Q338 forms a coiled coil. N6-acetyllysine is present on K331.

Belongs to the MCU (TC 1.A.77) family. As to quaternary structure, homotetramer. Component of the uniplex complex, composed of MCU, EMRE/SMDT1, MICU1 and MICU2 (or MICU3) in a 4:4:1:1 stoichiometry. Interacts with CCDC109B/MCUB; this inhibits channel activity. Interacts with MCUR1. Interactions with MICU1 and MCUR1 are mutually exclusive. Interacts with SLC25A23. Post-translationally, phosphorylation by CaMK2 in heart leads to increased MCU current. The regulation of MCU by CaMK2 is however subject to discussion: another group was unable to reproduce these results. Phosphorylated on tyrosines by PTK2B/PYK2, promoting oligomerization. In terms of processing, glutathionylation at Cys-96 in response to reactive oxygen species (ROS) promotes MCU higher-order assembly, leading to constitutive activation of the MCU channel and mitochondrial calcium overload. Undergoes proteolytic degradation by SPG7. In terms of tissue distribution, detected in heart muscle (at protein level). Expressed in skeletal muscle, heart, kidney, liver, brain, lung, white fat and spleen.

The protein resides in the mitochondrion inner membrane. The catalysed reaction is Ca(2+)(in) = Ca(2+)(out). With respect to regulation, MCU channel activity is regulated by the heterodimer composed of MICU1 and either MICU2 or MICU3, which act as calcium-sensors. At low calcium levels, MICU1 occludes the pore of the MCU channel, preventing mitochondrial calcium uptake. At higher calcium levels, calcium-binding to MICU1 and MICU2 (or MICU3) induces a conformational change that weakens MCU-MICU1 interactions and moves the MICU1-MICU2 heterodimer away from the pore, allowing calcium permeation through the channel. MCU channel activity is gated by EMRE/SMDT1 via the juxtamembrane helix loop. Inhibited by ruthenium red or its derivative Ru360. In terms of biological role, channel-forming and calcium-conducting subunit of the mitochondrial inner membrane calcium uniporter complex (uniplex), which mediates calcium uptake into the mitochondrial matrix. MCU channel activity is regulated by the calcium-sensor subunits of the uniplex MICU1 and MICU2 (or MICU3). Mitochondrial calcium homeostasis plays key roles in cellular physiology and regulates ATP production, cytoplasmic calcium signals and activation of cell death pathways. Involved in buffering the amplitude of systolic calcium rises in cardiomyocytes. While dispensable for baseline homeostatic cardiac function, acts as a key regulator of short-term mitochondrial calcium loading underlying a 'fight-or-flight' response during acute stress: acts by mediating a rapid increase of mitochondrial calcium in pacemaker cells. Participates in mitochondrial permeability transition during ischemia-reperfusion injury. Mitochondrial calcium uptake in skeletal muscle cells is involved in muscle size in adults. Regulates synaptic vesicle endocytosis kinetics in central nerve terminal. Regulates glucose-dependent insulin secretion in pancreatic beta-cells by regulating mitochondrial calcium uptake. Involved in antigen processing and presentation. In Mus musculus (Mouse), this protein is Calcium uniporter protein, mitochondrial.